A 429-amino-acid polypeptide reads, in one-letter code: Adenylosuccinate synthetase (429 aa).

GTP-binding positions include 12–18 and 40–42; these read GDEGKGK and GHT. D13 acts as the Proton acceptor in catalysis. Positions 13 and 40 each coordinate Mg(2+). IMP contacts are provided by residues 13 to 16, 38 to 41, T128, R142, Q223, T238, and R302; these read DEGK and NAGH. Catalysis depends on H41, which acts as the Proton donor. Substrate is bound at residue 298–304; it reads TTTGRPR. GTP contacts are provided by residues R304, 330-332, and 412-414; these read SID and SVG.

This sequence belongs to the adenylosuccinate synthetase family. As to quaternary structure, homodimer. Requires Mg(2+) as cofactor.

The protein resides in the cytoplasm. It catalyses the reaction IMP + L-aspartate + GTP = N(6)-(1,2-dicarboxyethyl)-AMP + GDP + phosphate + 2 H(+). It functions in the pathway purine metabolism; AMP biosynthesis via de novo pathway; AMP from IMP: step 1/2. Its function is as follows. Plays an important role in the de novo pathway of purine nucleotide biosynthesis. Catalyzes the first committed step in the biosynthesis of AMP from IMP. In Bacillus thuringiensis (strain Al Hakam), this protein is Adenylosuccinate synthetase.